A 205-amino-acid polypeptide reads, in one-letter code: uncharacterized protein (205 aa).

This is an uncharacterized protein from Caenorhabditis elegans.